The primary structure comprises 920 residues: Isoleucine--tRNA ligase (920 aa).

Residues 58–68 (PYANGHLHLGH) carry the 'HIGH' region motif. Glu569 provides a ligand contact to L-isoleucyl-5'-AMP. A 'KMSKS' region motif is present at residues 610–614 (KMSKS). Lys613 is a binding site for ATP. Zn(2+) is bound by residues Cys895, Cys898, Cys910, and Cys913.

The protein belongs to the class-I aminoacyl-tRNA synthetase family. IleS type 1 subfamily. As to quaternary structure, monomer. Zn(2+) is required as a cofactor.

Its subcellular location is the cytoplasm. The catalysed reaction is tRNA(Ile) + L-isoleucine + ATP = L-isoleucyl-tRNA(Ile) + AMP + diphosphate. Its function is as follows. Catalyzes the attachment of isoleucine to tRNA(Ile). As IleRS can inadvertently accommodate and process structurally similar amino acids such as valine, to avoid such errors it has two additional distinct tRNA(Ile)-dependent editing activities. One activity is designated as 'pretransfer' editing and involves the hydrolysis of activated Val-AMP. The other activity is designated 'posttransfer' editing and involves deacylation of mischarged Val-tRNA(Ile). The chain is Isoleucine--tRNA ligase from Helicobacter pylori (strain J99 / ATCC 700824) (Campylobacter pylori J99).